The sequence spans 218 residues: UPF0758 protein SAUSA300_1608 (218 aa).

Residues 92-214 (KITQPSDVAD…FTSLVEAGYF (123 aa)) form the MPN domain. Zn(2+) is bound by residues H163, H165, and D176. A JAMM motif motif is present at residues 163–176 (HNHPSGDVTPSQED).

This sequence belongs to the UPF0758 family.

This Staphylococcus aureus (strain USA300) protein is UPF0758 protein SAUSA300_1608.